The chain runs to 159 residues: Growth arrest and DNA damage-inducible protein GADD45 gamma (159 aa).

Positions 43–86 are homodimerization; sequence VYESAKVLNVDPDNVTFCVLAADEEDEGDIALQIHFTLIQAFCC.

It belongs to the GADD45 family. Undergoes concentration-dependent homodimerization, which is required for growth inhibititory activity and enhances interaction with PCNA. Interacts with GADD45GIP1. Interacts with PCNA.

Involved in the regulation of growth and apoptosis. Mediates activation of stress-responsive MTK1/MEKK4 MAPKKK. The sequence is that of Growth arrest and DNA damage-inducible protein GADD45 gamma (GADD45G) from Bos taurus (Bovine).